The chain runs to 130 residues: Trypsin inhibitor (130 aa).

The segment at 27 to 49 (LHKQARQSGSGPSPQGPQQRPPL) is disordered. Low complexity predominate over residues 32 to 49 (RQSGSGPSPQGPQQRPPL).

Belongs to the 2S seed storage albumins family. In terms of assembly, the protein consists of two chains linked by disulfide bonds.

Functionally, inhibits trypsin with a Ki of 7 x 10(-6) M. This chain is Trypsin inhibitor, found in Mutarda arvensis (Charlock mustard).